The chain runs to 432 residues: Adenylosuccinate synthetase (432 aa).

GTP is bound by residues 13–19 and 41–43; these read GDEGKGK and GHT. Asp14 serves as the catalytic Proton acceptor. 2 residues coordinate Mg(2+): Asp14 and Gly41. IMP-binding positions include 14 to 17, 39 to 42, Thr130, Arg144, Gln225, Thr240, and Arg304; these read DEGK and NAGH. Catalysis depends on His42, which acts as the Proton donor. Residue 300–306 participates in substrate binding; sequence AVTGRPR. GTP-binding positions include Arg306, 332–334, and 415–417; these read KLD and STG.

The protein belongs to the adenylosuccinate synthetase family. In terms of assembly, homodimer. It depends on Mg(2+) as a cofactor.

The protein resides in the cytoplasm. The catalysed reaction is IMP + L-aspartate + GTP = N(6)-(1,2-dicarboxyethyl)-AMP + GDP + phosphate + 2 H(+). It functions in the pathway purine metabolism; AMP biosynthesis via de novo pathway; AMP from IMP: step 1/2. In terms of biological role, plays an important role in the de novo pathway of purine nucleotide biosynthesis. Catalyzes the first committed step in the biosynthesis of AMP from IMP. This is Adenylosuccinate synthetase from Pasteurella multocida (strain Pm70).